Here is a 318-residue protein sequence, read N- to C-terminus: Beta-ketoacyl-[acyl-carrier-protein] synthase III (318 aa).

Active-site residues include Cys-113 and His-245. Residues 246-250 (QANIR) form an ACP-binding region. Residue Asn-275 is part of the active site.

It belongs to the thiolase-like superfamily. FabH family. As to quaternary structure, homodimer.

The protein localises to the cytoplasm. It catalyses the reaction malonyl-[ACP] + acetyl-CoA + H(+) = 3-oxobutanoyl-[ACP] + CO2 + CoA. It functions in the pathway lipid metabolism; fatty acid biosynthesis. Catalyzes the condensation reaction of fatty acid synthesis by the addition to an acyl acceptor of two carbons from malonyl-ACP. Catalyzes the first condensation reaction which initiates fatty acid synthesis and may therefore play a role in governing the total rate of fatty acid production. Possesses both acetoacetyl-ACP synthase and acetyl transacylase activities. Its substrate specificity determines the biosynthesis of branched-chain and/or straight-chain of fatty acids. This Wolbachia pipientis wMel protein is Beta-ketoacyl-[acyl-carrier-protein] synthase III.